Consider the following 723-residue polypeptide: MSITRPTGSYARQMLDPGGWVEADEDTFYDRAQEYSQVLQRVTDVLDTCRQQKGHVFEGGLWSGGAANAANGALGANINQLMTLQDYLATVITWHRHIAGLIEQAKSDIGNNVDGAQREIDILENDPSLDADERHTAINSLVTATHGANVSLVAETAERVLESKNWKPPKNALEDLLQQKSPPPPDVPTLVVPSPGTPGTPGTPITPGTPITPIPGAPVTPITPTPGTPVTPVTPGKPVTPVTPVKPGTPGEPTPITPVTPPVAPATPATPATPVTPAPAPHPQPAPAPAPSPGPQPVTPATPGPSGPATPGTPGGEPAPHVKPAALAEQPGVPGQHAGGGTQSGPAHADESAASVTPAAASGVPGARAAAAAPSGTAVGAGARSSVGTAAASGAGSHAATGRAPVATSDKAAAPSTRAASARTAPPARPPSTDHIDKPDRSESADDGTPVSMIPVSAARAARDAATAAASARQRGRGDALRLARRIAAALNASDNNAGDYGFFWITAVTTDGSIVVANSYGLAYIPDGMELPNKVYLASADHAIPVDEIARCATYPVLAVQAWAAFHDMTLRAVIGTAEQLASSDPGVAKIVLEPDDIPESGKMTGRSRLEVVDPSAAAQLADTTDQRLLDLLPPAPVDVNPPGDERHMLWFELMKPMTSTATGREAAHLRAFRAYAAHSQEIALHQAHTATDAAVQRVAVADWLYWQYVTGLLDRALAAAS.

Disordered regions lie at residues 175 to 360 (DLLQ…TPAA) and 393 to 451 (SGAG…GTPV). A compositionally biased stretch (low complexity) spans 200–209 (TPGTPITPGT). The segment covering 210 to 229 (PITPIPGAPVTPITPTPGTP) has biased composition (pro residues). The span at 230-249 (VTPVTPGKPVTPVTPVKPGT) shows a compositional bias: low complexity. Pro residues-rich tracts occupy residues 250–265 (PGEP…PVAP) and 274–308 (PVTP…PSGP). 3 stretches are compositionally biased toward low complexity: residues 309-319 (ATPGTPGGEPA), 393-404 (SGAGSHAATGRA), and 412-426 (AAAP…RTAP). Over residues 432-444 (STDHIDKPDRSES) the composition is skewed to basic and acidic residues.

The protein resides in the cytoplasm. In terms of biological role, may act as a chaperone that facilitates EspB secretion through an interaction with EccCb1. This is ESX-1 secretion-associated protein EspK from Mycobacterium tuberculosis (strain CDC 1551 / Oshkosh).